Here is a 310-residue protein sequence, read N- to C-terminus: Ribosomal RNA small subunit methyltransferase H (310 aa).

Residues 33–35, aspartate 52, phenylalanine 79, aspartate 98, and glutamine 105 contribute to the S-adenosyl-L-methionine site; that span reads GGH.

It belongs to the methyltransferase superfamily. RsmH family.

It is found in the cytoplasm. It carries out the reaction cytidine(1402) in 16S rRNA + S-adenosyl-L-methionine = N(4)-methylcytidine(1402) in 16S rRNA + S-adenosyl-L-homocysteine + H(+). In terms of biological role, specifically methylates the N4 position of cytidine in position 1402 (C1402) of 16S rRNA. The sequence is that of Ribosomal RNA small subunit methyltransferase H from Campylobacter jejuni subsp. jejuni serotype O:6 (strain 81116 / NCTC 11828).